We begin with the raw amino-acid sequence, 62 residues long: Bacteriocin piscicolin-126 (62 aa).

Residues 1–18 constitute a propeptide that is removed on maturation; it reads MKTVKELSVKEMQLTTGG. C27 and C32 are joined by a disulfide.

The protein localises to the secreted. Inhibits the growth of several Gram-positive bacteria, especially the food-borne pathogen L.monocytogenes, but has no effect on the growth of a number of yeasts and Gram-negative bacteria. The chain is Bacteriocin piscicolin-126 (pisA) from Carnobacterium maltaromaticum (Carnobacterium piscicola).